Consider the following 419-residue polypeptide: UDP-N-acetylglucosamine 1-carboxyvinyltransferase 2 (419 aa).

24 to 25 lines the phosphoenolpyruvate pocket; the sequence is KN. Arg94 provides a ligand contact to UDP-N-acetyl-alpha-D-glucosamine. Cys118 acts as the Proton donor in catalysis. A 2-(S-cysteinyl)pyruvic acid O-phosphothioketal modification is found at Cys118. UDP-N-acetyl-alpha-D-glucosamine is bound by residues 123 to 127, Asp307, and Ile329; that span reads RPIDQ.

The protein belongs to the EPSP synthase family. MurA subfamily.

It localises to the cytoplasm. It catalyses the reaction phosphoenolpyruvate + UDP-N-acetyl-alpha-D-glucosamine = UDP-N-acetyl-3-O-(1-carboxyvinyl)-alpha-D-glucosamine + phosphate. Its pathway is cell wall biogenesis; peptidoglycan biosynthesis. Cell wall formation. Adds enolpyruvyl to UDP-N-acetylglucosamine. This is UDP-N-acetylglucosamine 1-carboxyvinyltransferase 2 from Staphylococcus aureus (strain MSSA476).